A 164-amino-acid chain; its full sequence is MLFLGQKALLLVLAISIPSDWLPLGVSGQRGDDVPETFTDDPNLVNDPSTDDTALADITPSTDDLAGDKNATAECRDEKFACTRLYSVHRPVRQCVHQSCFTSLRRMYIINNEICSRLVCKEHEAMKDELCRQMAGLPPRRLRRSNYFRLPPCENMNLQRPDGL.

An N-terminal signal peptide occupies residues 1-28 (MLFLGQKALLLVLAISIPSDWLPLGVSG). The Cell attachment site motif lies at 30 to 32 (RGD). Asn70 carries an N-linked (GlcNAc...) asparagine glycan.

Belongs to the MFAP family. Interacts with TGFB2. Interacts with BMP2. Interacts with FBN1 (via N-terminal domain) and FBN2. Forms intermolecular disulfide bonds either with other MAGP-2 molecules or with other components of the microfibrils.

Its subcellular location is the secreted. It is found in the extracellular space. It localises to the extracellular matrix. Functionally, may play a role in hematopoiesis. In the cardiovascular system, could regulate growth factors or participate in cell signaling in maintaining large vessel integrity. Component of the elastin-associated microfibrils. The polypeptide is Microfibrillar-associated protein 5 (Mfap5) (Mus musculus (Mouse)).